The primary structure comprises 349 residues: Isopentenyl-diphosphate delta-isomerase (349 aa).

Residue 9 to 10 participates in substrate binding; that stretch reads RK. Residues 65-67, Ser95, and Asn124 contribute to the FMN site; that span reads AMT. 95 to 97 is a binding site for substrate; the sequence is STH. Gln154 is a substrate binding site. Mg(2+) is bound at residue Glu155. FMN contacts are provided by residues Lys186, Ser211, Thr216, 262–264, and 283–284; these read GLR and SR.

The protein belongs to the IPP isomerase type 2 family. In terms of assembly, homooctamer. Dimer of tetramers. Requires FMN as cofactor. NADPH is required as a cofactor. It depends on Mg(2+) as a cofactor.

Its subcellular location is the cytoplasm. The catalysed reaction is isopentenyl diphosphate = dimethylallyl diphosphate. Functionally, involved in the biosynthesis of isoprenoids. Catalyzes the 1,3-allylic rearrangement of the homoallylic substrate isopentenyl (IPP) to its allylic isomer, dimethylallyl diphosphate (DMAPP). This Staphylococcus aureus (strain USA300 / TCH1516) protein is Isopentenyl-diphosphate delta-isomerase.